We begin with the raw amino-acid sequence, 29 residues long: Lambda-theraphotoxin-Ec2c (29 aa).

Cystine bridges form between Cys-2–Cys-16, Cys-9–Cys-21, and Cys-15–Cys-25.

Belongs to the neurotoxin 30 (phrixotoxin) family. In terms of tissue distribution, expressed by the venom gland.

It localises to the secreted. In terms of biological role, both insecticidal and vertebrate neurotoxin that potently blocks insect calcium-activated potassium (BKCa) channels (Slo-type) in cockroach dorsal unpaired median (DUM) neurons (IC(50)=24.6 nM). This occurs in the absence of any shifts in the voltage dependence of activation. May interact with the turret and/or loop region of the external entrance to the channel and does not project deeply into the pore of the channel. Also shows toxicity to mice by introcerebroventicular injection. The protein is Lambda-theraphotoxin-Ec2c of Eucratoscelus constrictus (African red-rump baboon spider).